Here is a 117-residue protein sequence, read N- to C-terminus: Immunoglobulin heavy variable 3-7 (117 aa).

An N-terminal signal peptide occupies residues methionine 1 to cysteine 19. The tract at residues glutamate 20–serine 44 is framework-1. One can recognise an Ig-like domain in the interval glutamate 20 to arginine 117. A disulfide bridge connects residues cysteine 41 and cysteine 115. A complementarity-determining-1 region spans residues glycine 45–tryptophan 52. A framework-2 region spans residues methionine 53–asparagine 69. The segment at isoleucine 70–lysine 77 is complementarity-determining-2. The interval tyrosine 78–cysteine 115 is framework-3. Positions alanine 116–arginine 117 are complementarity-determining-3.

Immunoglobulins are composed of two identical heavy chains and two identical light chains; disulfide-linked.

The protein localises to the secreted. It is found in the cell membrane. In terms of biological role, v region of the variable domain of immunoglobulin heavy chains that participates in the antigen recognition. Immunoglobulins, also known as antibodies, are membrane-bound or secreted glycoproteins produced by B lymphocytes. In the recognition phase of humoral immunity, the membrane-bound immunoglobulins serve as receptors which, upon binding of a specific antigen, trigger the clonal expansion and differentiation of B lymphocytes into immunoglobulins-secreting plasma cells. Secreted immunoglobulins mediate the effector phase of humoral immunity, which results in the elimination of bound antigens. The antigen binding site is formed by the variable domain of one heavy chain, together with that of its associated light chain. Thus, each immunoglobulin has two antigen binding sites with remarkable affinity for a particular antigen. The variable domains are assembled by a process called V-(D)-J rearrangement and can then be subjected to somatic hypermutations which, after exposure to antigen and selection, allow affinity maturation for a particular antigen. This is Immunoglobulin heavy variable 3-7 from Homo sapiens (Human).